The chain runs to 1794 residues: Protein TIC 214 (1794 aa).

Helical transmembrane passes span 23 to 43 (VVVG…SYLF), 64 to 84 (FIMG…HLAL), 87 to 107 (PHTI…WNNH), 124 to 144 (LSIQ…HFIL), 172 to 192 (VGWL…LFWI), and 218 to 238 (ILSI…PSPI). Residues 244–307 (KETSETGETE…REGVNGKEKT (64 aa)) form a disordered region. The segment covering 248–258 (ETGETEEETDV) has biased composition (acidic residues). Basic and acidic residues-rich tracts occupy residues 259–276 (EIER…KEGS) and 286–307 (SEEK…KEKT).

Belongs to the TIC214 family. Part of the Tic complex.

It localises to the plastid. Its subcellular location is the chloroplast inner membrane. Functionally, involved in protein precursor import into chloroplasts. May be part of an intermediate translocation complex acting as a protein-conducting channel at the inner envelope. This is Protein TIC 214 from Amborella trichopoda.